Reading from the N-terminus, the 207-residue chain is 3-isopropylmalate dehydratase small subunit (207 aa).

The protein belongs to the LeuD family. LeuD type 1 subfamily. Heterodimer of LeuC and LeuD.

The catalysed reaction is (2R,3S)-3-isopropylmalate = (2S)-2-isopropylmalate. Its pathway is amino-acid biosynthesis; L-leucine biosynthesis; L-leucine from 3-methyl-2-oxobutanoate: step 2/4. Its function is as follows. Catalyzes the isomerization between 2-isopropylmalate and 3-isopropylmalate, via the formation of 2-isopropylmaleate. This is 3-isopropylmalate dehydratase small subunit from Rhodospirillum rubrum (strain ATCC 11170 / ATH 1.1.1 / DSM 467 / LMG 4362 / NCIMB 8255 / S1).